The primary structure comprises 310 residues: Protoheme IX farnesyltransferase (310 aa).

9 helical membrane passes run 31–51, 52–72, 102–119, 123–145, 151–171, 179–199, 225–245, 248–268, and 281–301; these read VMSL…DSIH, PLIA…AGAM, ALSF…FMAL, ILAS…IWLK, NIVI…AAVS, IILF…IALF, ILIY…IGMN, IYLI…FSLF, and FTYS…TSTI.

It belongs to the UbiA prenyltransferase family. Protoheme IX farnesyltransferase subfamily.

The protein localises to the cell inner membrane. It carries out the reaction heme b + (2E,6E)-farnesyl diphosphate + H2O = Fe(II)-heme o + diphosphate. It participates in porphyrin-containing compound metabolism; heme O biosynthesis; heme O from protoheme: step 1/1. Converts heme B (protoheme IX) to heme O by substitution of the vinyl group on carbon 2 of heme B porphyrin ring with a hydroxyethyl farnesyl side group. The protein is Protoheme IX farnesyltransferase of Rickettsia prowazekii (strain Madrid E).